The chain runs to 390 residues: Nucleosome assembly protein 1-like 1 (390 aa).

A compositionally biased stretch (basic and acidic residues) spans 1–10 (MADIDNKEQS). The tract at residues 1 to 32 (MADIDNKEQSELDQDLEDVEEVEEEETGEETK) is disordered. At Ala-2 the chain carries N-acetylalanine. Ser-10 bears the Phosphoserine mark. Over residues 11–28 (ELDQDLEDVEEVEEEETG) the composition is skewed to acidic residues. 2 positions are modified to phosphothreonine: Thr-62 and Thr-64. Ser-69 carries the phosphoserine modification. N6-acetyllysine is present on Lys-116. The NAP1L motif motif lies at 125-150 (YEPTEEECEWKPDEEDEVSEELKEKA). The segment covering 131-143 (ECEWKPDEEDEVS) has biased composition (acidic residues). Residues 131 to 163 (ECEWKPDEEDEVSEELKEKAKIEDEKKDEEKED) form a disordered region. At Ser-143 the chain carries Phosphoserine. Over residues 144 to 163 (EELKEKAKIEDEKKDEEKED) the composition is skewed to basic and acidic residues. The Nuclear localization signal motif lies at 272–278 (IKKKQKH). The span at 345–375 (AIEDDDDDYDEEGEEADEEGEEEGDEENDPD) shows a compositional bias: acidic residues. Positions 345–390 (AIEDDDDDYDEEGEEADEEGEEEGDEENDPDYDPKKDQNPAECKQQ) are disordered. 2 positions are modified to 5-glutamyl polyglycine: Glu-358 and Glu-359. Basic and acidic residues predominate over residues 376 to 390 (YDPKKDQNPAECKQQ). Residue Cys-387 is modified to Cysteine methyl ester. Cys-387 is lipidated: S-farnesyl cysteine. Residues 388 to 390 (KQQ) constitute a propeptide, removed in mature form.

Belongs to the nucleosome assembly protein (NAP) family. Homodimer. The dimer binds strongly and sequentially to single and double H2A-H2B heterodimers. Interacts with ERCC6; this interaction increases ERCC6 processivity. Interacts with RAD54. Interacts with SETD1A. In terms of processing, polyglycylated by TTLL10 on glutamate residues, resulting in polyglycine chains on the gamma-carboxyl group. Both polyglutamylation and polyglycylation modifications can coexist on the same protein on adjacent residues, and lowering polyglycylation levels increases polyglutamylation, and reciprocally. Post-translationally, polyglutamylated by TTLL4 on glutamate residues, resulting in polyglutamate chains on the gamma-carboxyl group. Both polyglutamylation and polyglycylation modifications can coexist on the same protein on adjacent residues, and lowering polyglycylation levels increases polyglutamylation, and reciprocally.

It localises to the nucleus. The protein resides in the melanosome. Its subcellular location is the cytoplasm. Histone chaperone that plays a role in the nuclear import of H2A-H2B and nucleosome assembly. Also participates in several important DNA repair mechanisms: greatly enhances ERCC6-mediated chromatin remodeling which is essential for transcription-coupled nucleotide excision DNA repair. Also stimulates homologous recombination (HR) by RAD51 and RAD54 which is essential in mitotic DNA double strand break (DSB) repair. Plays a key role in the regulation of embryonic neurogenesis. Promotes the proliferation of neural progenitors and inhibits neuronal differentiation during cortical development. Regulates neurogenesis via the modulation of RASSF10; regulates RASSF10 expression by promoting SETD1A-mediated H3K4 methylation at the RASSF10 promoter. The protein is Nucleosome assembly protein 1-like 1 (Nap1l1) of Rattus norvegicus (Rat).